An 892-amino-acid chain; its full sequence is Translation initiation factor IF-2 (892 aa).

Disordered stretches follow at residues 32–102 and 114–300; these read LAQA…PGDA and KAPE…KQAE. Over residues 35 to 48 the composition is skewed to polar residues; the sequence is AGSSDTKNSPASKA. Over residues 139 to 166 the composition is skewed to basic and acidic residues; that stretch reads QEEKKESSEETSPERVEETLIIRTRTEP. Positions 200-211 are enriched in low complexity; that stretch reads AASTEETTQQQP. Residues 212 to 224 are compositionally biased toward polar residues; that stretch reads RQNDAASYNNKQQ. Over residues 225–238 the composition is skewed to low complexity; sequence PSGTSSRPASSAPS. Basic and acidic residues predominate over residues 252 to 276; the sequence is RGSERDRSKRSDESVKAFTGRDRYG. The tr-type G domain maps to 397-566; the sequence is IRSPIVAFMG…ALQAEVLELK (170 aa). Residues 406 to 413 form a G1 region; it reads GHVDHGKT. Residue 406 to 413 coordinates GTP; that stretch reads GHVDHGKT. Positions 431–435 are G2; that stretch reads AITQH. Residues 452 to 455 are G3; sequence DTPG. Residues 452-456 and 506-509 contribute to the GTP site; these read DTPGH and NKCD. A G4 region spans residues 506–509; the sequence is NKCD. Residues 542–544 are G5; that stretch reads SAK.

Belongs to the TRAFAC class translation factor GTPase superfamily. Classic translation factor GTPase family. IF-2 subfamily.

It localises to the cytoplasm. Its function is as follows. One of the essential components for the initiation of protein synthesis. Protects formylmethionyl-tRNA from spontaneous hydrolysis and promotes its binding to the 30S ribosomal subunits. Also involved in the hydrolysis of GTP during the formation of the 70S ribosomal complex. The chain is Translation initiation factor IF-2 from Chlamydia trachomatis serovar A (strain ATCC VR-571B / DSM 19440 / HAR-13).